Consider the following 335-residue polypeptide: Methionine import ATP-binding protein MetN 1 (335 aa).

The 241-residue stretch at 2–242 (IEFQNVHKTY…PKHPTTKRFV (241 aa)) folds into the ABC transporter domain. Residue 38–45 (GHSGAGKS) participates in ATP binding.

This sequence belongs to the ABC transporter superfamily. Methionine importer (TC 3.A.1.24) family. In terms of assembly, the complex is composed of two ATP-binding proteins (MetN), two transmembrane proteins (MetI) and a solute-binding protein (MetQ).

It localises to the cell inner membrane. The catalysed reaction is L-methionine(out) + ATP + H2O = L-methionine(in) + ADP + phosphate + H(+). It catalyses the reaction D-methionine(out) + ATP + H2O = D-methionine(in) + ADP + phosphate + H(+). In terms of biological role, part of the ABC transporter complex MetNIQ involved in methionine import. Responsible for energy coupling to the transport system. This is Methionine import ATP-binding protein MetN 1 from Pseudomonas fluorescens (strain Pf0-1).